A 336-amino-acid chain; its full sequence is Pyridoxal 5'-phosphate synthase subunit PdxS (336 aa).

Residue aspartate 30 participates in D-ribose 5-phosphate binding. Lysine 87 (schiff-base intermediate with D-ribose 5-phosphate) is an active-site residue. D-ribose 5-phosphate is bound at residue glycine 159. Residue arginine 171 coordinates D-glyceraldehyde 3-phosphate. Residues glycine 257 and 278–279 (GS) each bind D-ribose 5-phosphate.

The protein belongs to the PdxS/SNZ family. In the presence of PdxT, forms a dodecamer of heterodimers.

It catalyses the reaction aldehydo-D-ribose 5-phosphate + D-glyceraldehyde 3-phosphate + L-glutamine = pyridoxal 5'-phosphate + L-glutamate + phosphate + 3 H2O + H(+). The protein operates within cofactor biosynthesis; pyridoxal 5'-phosphate biosynthesis. Catalyzes the formation of pyridoxal 5'-phosphate from ribose 5-phosphate (RBP), glyceraldehyde 3-phosphate (G3P) and ammonia. The ammonia is provided by the PdxT subunit. Can also use ribulose 5-phosphate and dihydroxyacetone phosphate as substrates, resulting from enzyme-catalyzed isomerization of RBP and G3P, respectively. The protein is Pyridoxal 5'-phosphate synthase subunit PdxS of Thermoplasma volcanium (strain ATCC 51530 / DSM 4299 / JCM 9571 / NBRC 15438 / GSS1).